The chain runs to 361 residues: tRNA-specific 2-thiouridylase MnmA (361 aa).

ATP contacts are provided by residues 8-15 and Met34; that span reads GMSGGVDS. The segment at 94-96 is interaction with target base in tRNA; sequence NPD. The active-site Nucleophile is the Cys99. Cysteines 99 and 195 form a disulfide. Gly123 lines the ATP pocket. The tract at residues 145–147 is interaction with tRNA; sequence KDQ. The active-site Cysteine persulfide intermediate is Cys195. Residues 307-308 form an interaction with tRNA region; the sequence is RY.

It belongs to the MnmA/TRMU family.

The protein localises to the cytoplasm. The catalysed reaction is S-sulfanyl-L-cysteinyl-[protein] + uridine(34) in tRNA + AH2 + ATP = 2-thiouridine(34) in tRNA + L-cysteinyl-[protein] + A + AMP + diphosphate + H(+). Catalyzes the 2-thiolation of uridine at the wobble position (U34) of tRNA, leading to the formation of s(2)U34. This is tRNA-specific 2-thiouridylase MnmA from Legionella pneumophila subsp. pneumophila (strain Philadelphia 1 / ATCC 33152 / DSM 7513).